We begin with the raw amino-acid sequence, 195 residues long: Protein GrpE (195 aa).

Belongs to the GrpE family. Homodimer.

Its subcellular location is the cytoplasm. Its function is as follows. Participates actively in the response to hyperosmotic and heat shock by preventing the aggregation of stress-denatured proteins, in association with DnaK and GrpE. It is the nucleotide exchange factor for DnaK and may function as a thermosensor. Unfolded proteins bind initially to DnaJ; upon interaction with the DnaJ-bound protein, DnaK hydrolyzes its bound ATP, resulting in the formation of a stable complex. GrpE releases ADP from DnaK; ATP binding to DnaK triggers the release of the substrate protein, thus completing the reaction cycle. Several rounds of ATP-dependent interactions between DnaJ, DnaK and GrpE are required for fully efficient folding. The polypeptide is Protein GrpE (Blochmanniella pennsylvanica (strain BPEN)).